Here is a 940-residue protein sequence, read N- to C-terminus: Isoleucine--tRNA ligase (940 aa).

Residues 58 to 68 carry the 'HIGH' region motif; sequence PYANGSIHIGH. E564 provides a ligand contact to L-isoleucyl-5'-AMP. Positions 605–609 match the 'KMSKS' region motif; the sequence is KMSKS. K608 serves as a coordination point for ATP. Zn(2+) is bound by residues C903, C906, C923, and C926.

The protein belongs to the class-I aminoacyl-tRNA synthetase family. IleS type 1 subfamily. Monomer. Requires Zn(2+) as cofactor.

It localises to the cytoplasm. It carries out the reaction tRNA(Ile) + L-isoleucine + ATP = L-isoleucyl-tRNA(Ile) + AMP + diphosphate. Catalyzes the attachment of isoleucine to tRNA(Ile). As IleRS can inadvertently accommodate and process structurally similar amino acids such as valine, to avoid such errors it has two additional distinct tRNA(Ile)-dependent editing activities. One activity is designated as 'pretransfer' editing and involves the hydrolysis of activated Val-AMP. The other activity is designated 'posttransfer' editing and involves deacylation of mischarged Val-tRNA(Ile). The polypeptide is Isoleucine--tRNA ligase (Shewanella putrefaciens (strain CN-32 / ATCC BAA-453)).